The sequence spans 180 residues: NAD(P)H-quinone oxidoreductase subunit I, chloroplastic (180 aa).

4Fe-4S ferredoxin-type domains lie at 55-84 and 95-124; these read GRIHFEFDKCIACEVCVRVCPIDLPVVDWR and LNYSIDFGICIFCGNCVEYCPTNCLSMTEE. The [4Fe-4S] cluster site is built by cysteine 64, cysteine 67, cysteine 70, cysteine 74, cysteine 104, cysteine 107, cysteine 110, and cysteine 114.

Belongs to the complex I 23 kDa subunit family. In terms of assembly, NDH is composed of at least 16 different subunits, 5 of which are encoded in the nucleus. It depends on [4Fe-4S] cluster as a cofactor.

Its subcellular location is the plastid. It localises to the chloroplast thylakoid membrane. It carries out the reaction a plastoquinone + NADH + (n+1) H(+)(in) = a plastoquinol + NAD(+) + n H(+)(out). The enzyme catalyses a plastoquinone + NADPH + (n+1) H(+)(in) = a plastoquinol + NADP(+) + n H(+)(out). NDH shuttles electrons from NAD(P)H:plastoquinone, via FMN and iron-sulfur (Fe-S) centers, to quinones in the photosynthetic chain and possibly in a chloroplast respiratory chain. The immediate electron acceptor for the enzyme in this species is believed to be plastoquinone. Couples the redox reaction to proton translocation, and thus conserves the redox energy in a proton gradient. The polypeptide is NAD(P)H-quinone oxidoreductase subunit I, chloroplastic (Amborella trichopoda).